The primary structure comprises 326 residues: ATP synthase gamma chain (326 aa).

Belongs to the ATPase gamma chain family. F-type ATPases have 2 components, CF(1) - the catalytic core - and CF(0) - the membrane proton channel. CF(1) has five subunits: alpha(3), beta(3), gamma(1), delta(1), epsilon(1). CF(0) has three main subunits: a, b and c.

The protein localises to the cell membrane. In terms of biological role, produces ATP from ADP in the presence of a proton gradient across the membrane. The gamma chain is believed to be important in regulating ATPase activity and the flow of protons through the CF(0) complex. The sequence is that of ATP synthase gamma chain from Corynebacterium jeikeium (strain K411).